Reading from the N-terminus, the 176-residue chain is ATP-dependent protease subunit HslV (176 aa).

Residue Thr5 is part of the active site. Residues Ser161, Cys164, and Thr167 each coordinate Na(+).

It belongs to the peptidase T1B family. HslV subfamily. In terms of assembly, a double ring-shaped homohexamer of HslV is capped on each side by a ring-shaped HslU homohexamer. The assembly of the HslU/HslV complex is dependent on binding of ATP.

Its subcellular location is the cytoplasm. It carries out the reaction ATP-dependent cleavage of peptide bonds with broad specificity.. Allosterically activated by HslU binding. Its function is as follows. Protease subunit of a proteasome-like degradation complex believed to be a general protein degrading machinery. In Desulfitobacterium hafniense (strain DSM 10664 / DCB-2), this protein is ATP-dependent protease subunit HslV.